Here is a 325-residue protein sequence, read N- to C-terminus: Beta-1,3-galactosyltransferase brn (325 aa).

The Cytoplasmic portion of the chain corresponds to 1–7; that stretch reads MQSKHRK. The helical; Signal-anchor for type II membrane protein transmembrane segment at 8–28 threads the bilayer; that stretch reads LLLRCLLVLPLILLVDYCGLL. The Lumenal portion of the chain corresponds to 29–325; it reads THLHELNFER…WNECRSANYA (297 aa). Residues N149 and N166 are each glycosylated (N-linked (GlcNAc...) asparagine).

This sequence belongs to the glycosyltransferase 31 family.

It localises to the golgi apparatus membrane. The enzyme catalyses a ganglioside GM2 (d18:1(4E)) + UDP-alpha-D-galactose = a ganglioside GM1 (d18:1(4E)) + UDP + H(+). Its function is as follows. Neurogenic protein essential for the development and maintenance of epithelial structure. Required in the germline for establishing the follicular epithelium and for determining the dorsal-ventral polarity. Collaborates with Notch on the apical surface of follicle cells to mediate germline-follicle cell adhesion. Brn has a role in chorion formation. This chain is Beta-1,3-galactosyltransferase brn (brn), found in Drosophila melanogaster (Fruit fly).